The sequence spans 261 residues: Putative carbamate hydrolase RutD (261 aa).

An AB hydrolase-1 domain is found at 14–119 (PTILLSSGLG…LINAWSKADP (106 aa)).

This sequence belongs to the AB hydrolase superfamily. Hydrolase RutD family.

The enzyme catalyses carbamate + 2 H(+) = NH4(+) + CO2. In terms of biological role, involved in pyrimidine catabolism. May facilitate the hydrolysis of carbamate, a reaction that can also occur spontaneously. This chain is Putative carbamate hydrolase RutD, found in Agrobacterium fabrum (strain C58 / ATCC 33970) (Agrobacterium tumefaciens (strain C58)).